Reading from the N-terminus, the 273-residue chain is MPELPEVETVRRGLEHLIVGKKIVSVEVRVPKMVKTGVEDFQLDILGQTFESIGRRGKYLLLNLNRQTIISHLRMEGKYLLFEDEVPDNKHFHLFFGLDGGSTLVYQDVRKFGTFELLPKSQVEAYFVQKKIGPEPNAKDFKLKPFEEGLAKSHKVIKTLLLDQHLVAGLGNIYVDEVLWAAKVDPERLASQLKKSEIKRIHDETIRILQLAIEKGGSTIRSYKNSLGEDGSMQDCLQVYGKTDQPCARCATPIEKIKVGGRGTHFCPSCQKQ.

The active-site Schiff-base intermediate with DNA is Pro-2. The active-site Proton donor is the Glu-3. The active-site Proton donor; for beta-elimination activity is Lys-58. 2 residues coordinate DNA: His-91 and Arg-110. Residues 238-272 (QVYGKTDQPCARCATPIEKIKVGGRGTHFCPSCQK) form an FPG-type zinc finger. The active-site Proton donor; for delta-elimination activity is the Arg-262.

It belongs to the FPG family. In terms of assembly, monomer. The cofactor is Zn(2+).

The catalysed reaction is Hydrolysis of DNA containing ring-opened 7-methylguanine residues, releasing 2,6-diamino-4-hydroxy-5-(N-methyl)formamidopyrimidine.. The enzyme catalyses 2'-deoxyribonucleotide-(2'-deoxyribose 5'-phosphate)-2'-deoxyribonucleotide-DNA = a 3'-end 2'-deoxyribonucleotide-(2,3-dehydro-2,3-deoxyribose 5'-phosphate)-DNA + a 5'-end 5'-phospho-2'-deoxyribonucleoside-DNA + H(+). In terms of biological role, involved in base excision repair of DNA damaged by oxidation or by mutagenic agents. Acts as a DNA glycosylase that recognizes and removes damaged bases. Has a preference for oxidized purines, such as 7,8-dihydro-8-oxoguanine (8-oxoG). Has AP (apurinic/apyrimidinic) lyase activity and introduces nicks in the DNA strand. Cleaves the DNA backbone by beta-delta elimination to generate a single-strand break at the site of the removed base with both 3'- and 5'-phosphates. The protein is Formamidopyrimidine-DNA glycosylase (mutM) of Streptococcus mutans serotype c (strain ATCC 700610 / UA159).